Here is a 339-residue protein sequence, read N- to C-terminus: Deubiquitinase and deneddylase Dub2 (339 aa).

Residues 36–56 (IIIALFLIVISCGLILCAYTF) traverse the membrane as a helical segment. Active-site residues include His203, Asp220, and Cys282.

It belongs to the peptidase C48 family.

The protein localises to the secreted. Its subcellular location is the host cell. It is found in the membrane. Its function is as follows. Effector proteins function to alter host cell physiology and promote bacterial survival in host tissues. This protease possesses deubiquitinating and deneddylating activities. In Chlamydia trachomatis serovar B (strain Jali20/OT), this protein is Deubiquitinase and deneddylase Dub2 (cdu2).